Reading from the N-terminus, the 216-residue chain is Ribonuclease HII (216 aa).

One can recognise an RNase H type-2 domain in the interval 27 to 216 (ASLAGVDEAG…VKEHVKNCEG (190 aa)). A divalent metal cation is bound by residues Asp-33, Glu-34, and Asp-125.

It belongs to the RNase HII family. Mn(2+) serves as cofactor. The cofactor is Mg(2+).

The protein resides in the cytoplasm. It catalyses the reaction Endonucleolytic cleavage to 5'-phosphomonoester.. Its function is as follows. Endonuclease that specifically degrades the RNA of RNA-DNA hybrids. The chain is Ribonuclease HII from Geotalea daltonii (strain DSM 22248 / JCM 15807 / FRC-32) (Geobacter daltonii).